The primary structure comprises 165 residues: MPLNREDKQAVVAEVAAQVAKAQTVVLAEYRGIAVGDLTKLRAQAREKQVYLRVLKNTLARRAVEGTPFAPLAEQMTGPLIYGISEDAIAAAKVVNDFSKSNDKLVIKAGSFDGKVMDKAGVQALASIPSREELLSKLLFVMQSPVSGFARALAALAEKKQAEAA.

It belongs to the universal ribosomal protein uL10 family. As to quaternary structure, part of the ribosomal stalk of the 50S ribosomal subunit. The N-terminus interacts with L11 and the large rRNA to form the base of the stalk. The C-terminus forms an elongated spine to which L12 dimers bind in a sequential fashion forming a multimeric L10(L12)X complex.

Forms part of the ribosomal stalk, playing a central role in the interaction of the ribosome with GTP-bound translation factors. In Burkholderia ambifaria (strain MC40-6), this protein is Large ribosomal subunit protein uL10.